Here is a 217-residue protein sequence, read N- to C-terminus: MGQKVHPIGMRVGIIRDWDAKWYAEKEYADYLHEDLAIRKFINKELADASVSTIEIERAVNKVIVSLHTAKPGMVIGKGGANVDALRGQLNKLTGKQVHINIIEIKQPDLDAHLVGENIARQLEQRVAFRRAQKQAIQRTMRAGAKGIKTQVSGRLNGADIARAEGYSEGTVPLHTLRADIDYAWEEADTTYGKLGVKVWIYRGEVLPARKNTKGGK.

The KH type-2 domain occupies 38–106 (IRKFINKELA…QVHINIIEIK (69 aa)).

It belongs to the universal ribosomal protein uS3 family. Part of the 30S ribosomal subunit. Forms a tight complex with proteins S10 and S14.

In terms of biological role, binds the lower part of the 30S subunit head. Binds mRNA in the 70S ribosome, positioning it for translation. This Streptococcus pyogenes serotype M6 (strain ATCC BAA-946 / MGAS10394) protein is Small ribosomal subunit protein uS3.